A 347-amino-acid chain; its full sequence is Dihydroorotase (347 aa).

Positions 17 and 19 each coordinate Zn(2+). Residues 19–21 (HVR) and asparagine 45 contribute to the substrate site. Zn(2+) contacts are provided by lysine 102, histidine 139, and histidine 177. An N6-carboxylysine modification is found at lysine 102. Histidine 139 is a substrate binding site. Leucine 222 provides a ligand contact to substrate. Aspartate 250 is a Zn(2+) binding site. The active site involves aspartate 250. Histidine 254 and alanine 266 together coordinate substrate.

The protein belongs to the metallo-dependent hydrolases superfamily. DHOase family. Class II DHOase subfamily. Homodimer. Zn(2+) is required as a cofactor.

It catalyses the reaction (S)-dihydroorotate + H2O = N-carbamoyl-L-aspartate + H(+). Its pathway is pyrimidine metabolism; UMP biosynthesis via de novo pathway; (S)-dihydroorotate from bicarbonate: step 3/3. Catalyzes the reversible cyclization of carbamoyl aspartate to dihydroorotate. This chain is Dihydroorotase, found in Acidovorax sp. (strain JS42).